Reading from the N-terminus, the 2460-residue chain is Reducing polyketide synthase BOA6 (2460 aa).

The Ketosynthase family 3 (KS3) domain occupies 5 to 438 (NEPIAVIGTG…GTNAHAILES (434 aa)). Active-site for beta-ketoacyl synthase activity residues include Cys-178, His-317, and His-360. The malonyl-CoA:ACP transacylase (MAT) domain stretch occupies residues 549–864 (VFTGQGAQWP…PYTGVLSRGD (316 aa)). Positions 938 to 1073 (HELLGVRCAD…GRIKMTLGTP (136 aa)) are N-terminal hotdog fold. Positions 938–1244 (HELLGVRCAD…QMQSFTAARP (307 aa)) are dehydratase (DH) domain. A PKS/mFAS DH domain is found at 938 to 1245 (HELLGVRCAD…MQSFTAARPS (308 aa)). The active-site Proton acceptor; for dehydratase activity is His-970. The tract at residues 1088–1245 (LGPLNVDRFY…MQSFTAARPS (158 aa)) is C-terminal hotdog fold. Catalysis depends on Asp-1145, which acts as the Proton donor; for dehydratase activity. The methyltransferase (MT) domain stretch occupies residues 1399 to 1586 (NKFVTAAMKK…VNDFKDKSRY (188 aa)). A ketoreductase (KR) domain region spans residues 2098–2266 (SYLLAGLTGD…KRGGVASVIH (169 aa)). A Carrier domain is found at 2378–2456 (DEVLGVMQKC…DLCELACEEY (79 aa)). Ser-2416 is subject to O-(pantetheine 4'-phosphoryl)serine.

Its pathway is polyketide biosynthesis. Reducing polyketide synthase; part of the gene cluster A that mediates the biosynthesis of botcinic acid and its botcinin derivatives, acetate-derived polyketides that contribute to virulence when combined with the sesquiterpene botrydial. Botcinic acid and its derivatives have been shown to induce chlorosis and necrosis during host plant infection, but also have antifungal activities. Two polyketide synthases, BOA6 and BOA9, are involved in the biosynthesis of botcinins. BOA6 mediates the formation of the per-methylated tetraketide core by condensation of four units of malonyl-CoA with one unit of acetyl-CoA, which would be methylated in activated methylene groups to yield a bicyclic acid intermediate that could then either be converted to botrylactone derivatives or lose the starter acetate unit through a retro-Claisen type C-C bond cleavage to yield botcinin derivatives. The second polyketide synthase, BOA9, is probably required for the biosynthesis of the tetraketide side chain of botcinins. The methyltransferase (MT) domain within BOA6 is probably responsible for the incorporation of four methyl groups. The trans-enoyl reductase BOA5 might take over the enoyl reductase function of BOA6 that misses an ER domain. The monooxygenases BOA2, BOA3 and BOA4 might be involved in further hydroxylations at C4, C5 and C8, whereas BOA7, close to BOA9, could potentially be involved in the hydroxylation at C4 in the side chain of botcinins. In Botryotinia fuckeliana (strain B05.10) (Noble rot fungus), this protein is Reducing polyketide synthase BOA6.